The primary structure comprises 416 residues: MGRFTLKCLKCGREYGQEYRLTCDNDDSLLRADYFEKKLELRDQPGIGRFHSWLPVQEELTTEAGPITYKSEALAKELGLSNLYIGFSGYWPEREALIKTCSFKELEAHPTMQLLKESGGKAIVLASAGNTGRAFAYSSSLTGTDAYIVVPDSGVSSIWLPEEPANSIHLISMTPGNDYTDAINLAGRLAKLPGMVPEGGARNVARREGMGTVMLDAAVTIGKMPDHYFQAVGSGTGGMSAWEASLRLRDDGRFGSKLPKLQLAQNLPFVPMYNAWKAGRREIIPDIDMKDAKKQIEETYATVLTNRAPPYSITGGLYDALVDTDGIMYAITREEALEAKALFESLEGIDILEPSAVAAASLLKAVEAGNVEKDDVILLNIAGGGFKRLKEDFTLFQVEPEVTVSSSEVSLDELKI.

Lys104 carries the post-translational modification N6-(pyridoxal phosphate)lysine. Asn130 contributes to the pyridoxal 5'-phosphate binding site.

The protein belongs to the threonine synthase family. Cysteate synthase subfamily. Homotrimer. It depends on pyridoxal 5'-phosphate as a cofactor.

It carries out the reaction O-phospho-L-serine + sulfite + H(+) = L-cysteate + phosphate. It participates in cofactor biosynthesis; coenzyme M biosynthesis. Functionally, specifically catalyzes the beta-elimination of phosphate from L-phosphoserine and the beta-addition of sulfite to the dehydroalanine intermediate to produce L-cysteate. The sequence is that of Cysteate synthase from Methanosarcina mazei (strain ATCC BAA-159 / DSM 3647 / Goe1 / Go1 / JCM 11833 / OCM 88) (Methanosarcina frisia).